Consider the following 532-residue polypeptide: Zinc finger protein 350 (532 aa).

The KRAB domain maps to 8–79; the sequence is ITLEDVAVDF…EDGIHSGACS (72 aa). C2H2-type zinc fingers lie at residues 206–228, 234–256, 262–284, 290–312, 318–340, 346–368, 374–396, and 402–424; these read HVCS…QVMH, HRCS…QRTH, YECP…QKTH, YICS…QRIH, YICN…QRFH, FVCS…QRIH, FECS…QRTH, and YGCN…KRIH. The span at 427–443 shows a compositional bias: basic and acidic residues; that stretch reads EKQEAAKVENPPAERHS. The disordered stretch occupies residues 427–465; it reads EKQEAAKVENPPAERHSSLHTSDVMQEKNSANGATTQVP. The segment covering 445 to 465 has biased composition (polar residues); sequence LHTSDVMQEKNSANGATTQVP.

This sequence belongs to the krueppel C2H2-type zinc-finger protein family. In terms of assembly, interacts with BRCA1. Interacts with RNF11. Widely expressed.

It localises to the nucleus. The protein localises to the nucleus matrix. Functionally, transcriptional repressor. Binds to a specific sequence, 5'-GGGxxxCAGxxxTTT-3', within GADD45 intron 3. The chain is Zinc finger protein 350 (ZNF350) from Homo sapiens (Human).